Consider the following 621-residue polypeptide: uncharacterized protein (621 aa).

The protein localises to the plastid. Its subcellular location is the chloroplast. This is an uncharacterized protein from Porphyra purpurea (Red seaweed).